The sequence spans 252 residues: Triosephosphate isomerase (252 aa).

Residue N10–K12 coordinates substrate. The active-site Electrophile is the H96. Catalysis depends on E168, which acts as the Proton acceptor. Residues G174, S214, and G235 to G236 each bind substrate.

Belongs to the triosephosphate isomerase family. As to quaternary structure, homodimer.

The protein resides in the cytoplasm. It carries out the reaction D-glyceraldehyde 3-phosphate = dihydroxyacetone phosphate. The protein operates within carbohydrate biosynthesis; gluconeogenesis. It participates in carbohydrate degradation; glycolysis; D-glyceraldehyde 3-phosphate from glycerone phosphate: step 1/1. Functionally, involved in the gluconeogenesis. Catalyzes stereospecifically the conversion of dihydroxyacetone phosphate (DHAP) to D-glyceraldehyde-3-phosphate (G3P). This Lactobacillus acidophilus (strain ATCC 700396 / NCK56 / N2 / NCFM) protein is Triosephosphate isomerase.